The primary structure comprises 238 residues: Deoxyribose-phosphate aldolase (238 aa).

The active-site Proton donor/acceptor is Asp104. Lys168 functions as the Schiff-base intermediate with acetaldehyde in the catalytic mechanism. Lys197 acts as the Proton donor/acceptor in catalysis.

Belongs to the DeoC/FbaB aldolase family. DeoC type 1 subfamily.

The protein localises to the cytoplasm. The catalysed reaction is 2-deoxy-D-ribose 5-phosphate = D-glyceraldehyde 3-phosphate + acetaldehyde. It functions in the pathway carbohydrate degradation; 2-deoxy-D-ribose 1-phosphate degradation; D-glyceraldehyde 3-phosphate and acetaldehyde from 2-deoxy-alpha-D-ribose 1-phosphate: step 2/2. Its function is as follows. Catalyzes a reversible aldol reaction between acetaldehyde and D-glyceraldehyde 3-phosphate to generate 2-deoxy-D-ribose 5-phosphate. In Bacteroides thetaiotaomicron (strain ATCC 29148 / DSM 2079 / JCM 5827 / CCUG 10774 / NCTC 10582 / VPI-5482 / E50), this protein is Deoxyribose-phosphate aldolase.